Here is a 302-residue protein sequence, read N- to C-terminus: Acidic endochitinase (302 aa).

The signal sequence occupies residues 1–30 (MTNMTLRKHVIYFLFFISCSLSKPSDASRG). In terms of domain architecture, GH18 spans 31–302 (GIAIYWGQNG…GYSSSILASV (272 aa)). 2 cysteine pairs are disulfide-bonded: Cys49-Cys96 and Cys79-Cys86. Catalysis depends on Glu156, which acts as the Proton donor. A disulfide bridge connects residues Cys188 and Cys217.

This sequence belongs to the glycosyl hydrolase 18 family. Chitinase class III subfamily.

Its subcellular location is the secreted. The protein resides in the extracellular space. It catalyses the reaction Random endo-hydrolysis of N-acetyl-beta-D-glucosaminide (1-&gt;4)-beta-linkages in chitin and chitodextrins.. Functionally, this protein functions as a defense against chitin containing fungal pathogens. The polypeptide is Acidic endochitinase (CHIB1) (Arabidopsis thaliana (Mouse-ear cress)).